Reading from the N-terminus, the 59-residue chain is Large ribosomal subunit protein bL32 (59 aa).

The tract at residues 1–59 (MAVQQNRKTPSKRGMRRSHDALSGPALSVEPQTGETHRRHHVSPDGYYRGRKVMQGRED) is disordered. Positions 49-59 (RGRKVMQGRED) are enriched in basic residues.

The protein belongs to the bacterial ribosomal protein bL32 family.

This Alkalilimnicola ehrlichii (strain ATCC BAA-1101 / DSM 17681 / MLHE-1) protein is Large ribosomal subunit protein bL32.